Here is a 558-residue protein sequence, read N- to C-terminus: CTP synthase (558 aa).

Residues 1–270 (MTKYVFVTGG…DDLICRELDL (270 aa)) form an amidoligase domain region. A CTP-binding site is contributed by S13. S13 is a UTP binding site. Residues 14-19 (SLGKGI) and D71 contribute to the ATP site. Residues D71 and E144 each contribute to the Mg(2+) site. CTP is bound by residues 151-153 (DIE), 191-196 (KTKPTQ), and K227. UTP is bound by residues 191-196 (KTKPTQ) and K227. One can recognise a Glutamine amidotransferase type-1 domain in the interval 295-547 (TIGMVGKYVE…ISAALEHQKK (253 aa)). G356 contributes to the L-glutamine binding site. Catalysis depends on C383, which acts as the Nucleophile; for glutamine hydrolysis. L-glutamine is bound by residues 384-387 (LGMQ), E407, and R473. Catalysis depends on residues H520 and E522.

Belongs to the CTP synthase family. In terms of assembly, homotetramer.

It catalyses the reaction UTP + L-glutamine + ATP + H2O = CTP + L-glutamate + ADP + phosphate + 2 H(+). The enzyme catalyses L-glutamine + H2O = L-glutamate + NH4(+). It carries out the reaction UTP + NH4(+) + ATP = CTP + ADP + phosphate + 2 H(+). The protein operates within pyrimidine metabolism; CTP biosynthesis via de novo pathway; CTP from UDP: step 2/2. Its activity is regulated as follows. Allosterically activated by GTP, when glutamine is the substrate; GTP has no effect on the reaction when ammonia is the substrate. The allosteric effector GTP functions by stabilizing the protein conformation that binds the tetrahedral intermediate(s) formed during glutamine hydrolysis. Inhibited by the product CTP, via allosteric rather than competitive inhibition. Catalyzes the ATP-dependent amination of UTP to CTP with either L-glutamine or ammonia as the source of nitrogen. Regulates intracellular CTP levels through interactions with the four ribonucleotide triphosphates. The sequence is that of CTP synthase from Polynucleobacter necessarius subsp. necessarius (strain STIR1).